A 341-amino-acid polypeptide reads, in one-letter code: HTH-type transcriptional repressor PurR (341 aa).

The HTH lacI-type domain occupies 2-56 (ATIKDVAKRANVSTTTVSHVINKTRFVAEETRNAVWAAIKELHYSPSAVARSLKV). A DNA-binding region (H-T-H motif) is located at residues 4–23 (IKDVAKRANVSTTTVSHVIN). A DNA-binding region spans residues 48 to 56 (SAVARSLKV). Hypoxanthine-binding residues include Tyr-73, Arg-190, Thr-192, Phe-221, and Asp-275.

Homodimer.

The protein operates within purine metabolism; purine nucleotide biosynthesis [regulation]. Is the main repressor of the genes involved in the de novo synthesis of purine nucleotides, regulating purB, purC, purEK, purF, purHD, purL, purMN and guaBA expression. PurR is allosterically activated to bind its cognate DNA by binding the purine corepressors, hypoxanthine or guanine, thereby effecting transcription repression. This is HTH-type transcriptional repressor PurR from Klebsiella pneumoniae (strain 342).